The chain runs to 301 residues: Phosphatidylglycerol--prolipoprotein diacylglyceryl transferase (301 aa).

The next 3 membrane-spanning stretches (helical) occupy residues 17-37 (LAVRWYGLMYLVAFIAAIVVG), 59-79 (MLFYGVLGTILGGRLGYVLFY), and 97-117 (GGMSFHGGFLGVTLAMVLFAY). Residue arginine 142 participates in a 1,2-diacyl-sn-glycero-3-phospho-(1'-sn-glycerol) binding. The next 2 membrane-spanning stretches (helical) occupy residues 230-250 (MGAISAVFLIGYGLARFTVEF) and 265-285 (LSMGQWLSLPMILVGIGLLVW).

Belongs to the Lgt family.

The protein localises to the cell inner membrane. The catalysed reaction is L-cysteinyl-[prolipoprotein] + a 1,2-diacyl-sn-glycero-3-phospho-(1'-sn-glycerol) = an S-1,2-diacyl-sn-glyceryl-L-cysteinyl-[prolipoprotein] + sn-glycerol 1-phosphate + H(+). Its pathway is protein modification; lipoprotein biosynthesis (diacylglyceryl transfer). Functionally, catalyzes the transfer of the diacylglyceryl group from phosphatidylglycerol to the sulfhydryl group of the N-terminal cysteine of a prolipoprotein, the first step in the formation of mature lipoproteins. The protein is Phosphatidylglycerol--prolipoprotein diacylglyceryl transferase of Paraburkholderia phytofirmans (strain DSM 17436 / LMG 22146 / PsJN) (Burkholderia phytofirmans).